A 383-amino-acid chain; its full sequence is Succinyl-diaminopimelate desuccinylase (383 aa).

His-73 is a Zn(2+) binding site. The active site involves Asp-75. Asp-107 is a Zn(2+) binding site. Residue Glu-141 is the Proton acceptor of the active site. The Zn(2+) site is built by Glu-142, Glu-170, and His-356.

It belongs to the peptidase M20A family. DapE subfamily. Homodimer. Zn(2+) is required as a cofactor. It depends on Co(2+) as a cofactor.

It carries out the reaction N-succinyl-(2S,6S)-2,6-diaminopimelate + H2O = (2S,6S)-2,6-diaminopimelate + succinate. The protein operates within amino-acid biosynthesis; L-lysine biosynthesis via DAP pathway; LL-2,6-diaminopimelate from (S)-tetrahydrodipicolinate (succinylase route): step 3/3. In terms of biological role, catalyzes the hydrolysis of N-succinyl-L,L-diaminopimelic acid (SDAP), forming succinate and LL-2,6-diaminopimelate (DAP), an intermediate involved in the bacterial biosynthesis of lysine and meso-diaminopimelic acid, an essential component of bacterial cell walls. This Pseudomonas aeruginosa (strain ATCC 15692 / DSM 22644 / CIP 104116 / JCM 14847 / LMG 12228 / 1C / PRS 101 / PAO1) protein is Succinyl-diaminopimelate desuccinylase.